The following is a 724-amino-acid chain: Protein BCH1 (724 aa).

Positions 51–65 (TTATASANDNGATSN) are enriched in low complexity. The segment at 51–71 (TTATASANDNGATSNINGQDP) is disordered. Residues 711–724 (LNFLKNFTNDTFDN) are CHS5-binding.

The protein belongs to the CHAPS family. In terms of assembly, component of the CHS5/6 complex composed of the 4 CHAPS proteins BCH1, BCH2, BUD7, and CHS6 as well as at least CHS5 and GTP-bound ARF1. The complex interacts with the cargo protein CHS3.

It is found in the golgi apparatus. It localises to the trans-Golgi network membrane. Member of the CHS5-ARF1P-binding proteins (CHAPS) which mediates export of specific cargo proteins, including chitin synthase CHS3. The polypeptide is Protein BCH1 (BCH1) (Saccharomyces cerevisiae (strain ATCC 204508 / S288c) (Baker's yeast)).